A 276-amino-acid polypeptide reads, in one-letter code: Lyso-ornithine lipid O-acyltransferase (276 aa).

A helical transmembrane segment spans residues 25 to 47 (LALRGGAMALVLMAGLTLHLAVR).

Belongs to the 1-acyl-sn-glycerol-3-phosphate acyltransferase family. OlsA subfamily.

It localises to the membrane. The enzyme catalyses a lyso-ornithine lipid + a fatty acyl-[ACP] = an N(2)-[(3R)-3-(acyloxy)acyl]-L-ornithine lipid + holo-[ACP]. It catalyses the reaction a fatty acyl-[ACP] + a 1-acyl-sn-glycero-3-phosphate = a 1,2-diacyl-sn-glycero-3-phosphate + holo-[ACP]. Its pathway is lipid metabolism. It functions in the pathway phospholipid metabolism. Its function is as follows. Catalyzes the second step in the formation of ornithine lipids, which are phosphorus-free membrane lipids. Uses acyl-acyl carrier protein (acyl-AcpP) as an acyl donor and converts lyso-ornithine lipid (LOL) into ornithine lipid (OL). It can also act as an alternate acyl-sn-glycerol-3-phosphate acyltransferase (AGPAT) to ensure glycerophospholipid production. The polypeptide is Lyso-ornithine lipid O-acyltransferase (Rhodobacter capsulatus (strain ATCC BAA-309 / NBRC 16581 / SB1003)).